Consider the following 75-residue polypeptide: DNA-directed RNA polymerase subunit omega (75 aa).

This sequence belongs to the RNA polymerase subunit omega family. The RNAP catalytic core consists of 2 alpha, 1 beta, 1 beta' and 1 omega subunit. When a sigma factor is associated with the core the holoenzyme is formed, which can initiate transcription.

It carries out the reaction RNA(n) + a ribonucleoside 5'-triphosphate = RNA(n+1) + diphosphate. Its function is as follows. Promotes RNA polymerase assembly. Latches the N- and C-terminal regions of the beta' subunit thereby facilitating its interaction with the beta and alpha subunits. This Lysinibacillus sphaericus (strain C3-41) protein is DNA-directed RNA polymerase subunit omega.